A 1052-amino-acid chain; its full sequence is RIMS-binding protein 2 (1052 aa).

Positions 115–164 are disordered; that stretch reads GEYIRPLPQPGDRPEPLSAKPTFLSRSGSARCRSESDMENERNSNTSKQR. The segment covering 146 to 156 has biased composition (basic and acidic residues); it reads CRSESDMENER. The SH3 1 domain occupies 167–234; the sequence is GKVHLCVARY…PSNFVDFVQD (68 aa). Fibronectin type-III domains follow at residues 297-390, 393-475, and 489-590; these read VPYP…GKDV, APSH…KKEA, and PPQD…VPPT. 5 disordered regions span residues 584–615, 629–666, 697–716, 767–787, and 805–829; these read ELLV…DEHL, RAPG…PVST, SAGQ…PDFK, EMQL…NALK, and FPRG…YGRD. A compositionally biased stretch (pro residues) spans 585 to 598; sequence LLVPPTPHPRPAPQ. Over residues 645–654 the composition is skewed to low complexity; it reads PGRRSPSPSR. Phosphoserine is present on residues Ser704 and Ser712. Phosphoserine is present on residues Ser832 and Ser839. At Thr841 the chain carries Phosphothreonine. 2 SH3 domains span residues 848–916 and 952–1019; these read LPAR…EIQA and VSTR…EVPD. A disordered region spans residues 1029–1052; sequence PSHYSQDTPMRSKAKRKKSVHFTP. Positions 1040–1052 are enriched in basic residues; the sequence is SKAKRKKSVHFTP.

Belongs to the RIMBP family. In terms of assembly, interacts with RIMS1, RIMS2, CACNA1D and CACNA1B, and potentially with other Ca(2+) channel alpha-1 isoforms.

It localises to the cell membrane. It is found in the synapse. In terms of biological role, plays a role in the synaptic transmission as bifunctional linker that interacts simultaneously with RIMS1, RIMS2, CACNA1D and CACNA1B. The polypeptide is RIMS-binding protein 2 (RIMBP2) (Homo sapiens (Human)).